The chain runs to 112 residues: MFKILLVCALVALVAANENPEVKELVNDVQADGFVSKLVLDNGSAASATGDVHGNIDGVFEWVSPEGEHVRVSYKADENGYQPQSDLLPTPPPIPEAILKAIAYIQAHPSKE.

The first 16 residues, 1–16 (MFKILLVCALVALVAA), serve as a signal peptide directing secretion. The region spanning 31–92 (ADGFVSKLVL…PQSDLLPTPP (62 aa)) is the Chitin-binding type R&amp;R domain.

Its function is as follows. Component of the larval cuticle. This chain is Larval cuticle protein 4 (Lcp4), found in Drosophila melanogaster (Fruit fly).